The chain runs to 283 residues: Homeobox-leucine zipper protein HAT2 (283 aa).

Positions 64-134 (VNCEEDTGVS…GETSRKKLRL (71 aa)) are disordered. Residues 73-84 (SSPNSTISSTIS) are compositionally biased toward low complexity. The segment at residues 127 to 186 (TSRKKLRLSKDQSAFLEETFKEHNTLNPKQKLALAKKLNLTARQVEVWFQNRRARTKLKQ) is a DNA-binding region (homeobox). A leucine-zipper region spans residues 194-215 (LKRCVEKLTEENRRLQKEAMEL).

It belongs to the HD-ZIP homeobox family. Class II subfamily. In terms of assembly, interacts with RBR1.

The protein resides in the nucleus. Functionally, probable transcription factor that plays a role in auxin-mediated morphogenesis. Negatively regulates lateral root elongation. The sequence is that of Homeobox-leucine zipper protein HAT2 (HAT2) from Arabidopsis thaliana (Mouse-ear cress).